Reading from the N-terminus, the 115-residue chain is Peptidyl-tRNA hydrolase (115 aa).

Belongs to the PTH2 family.

The protein resides in the cytoplasm. It carries out the reaction an N-acyl-L-alpha-aminoacyl-tRNA + H2O = an N-acyl-L-amino acid + a tRNA + H(+). In terms of biological role, the natural substrate for this enzyme may be peptidyl-tRNAs which drop off the ribosome during protein synthesis. The protein is Peptidyl-tRNA hydrolase of Methanosarcina acetivorans (strain ATCC 35395 / DSM 2834 / JCM 12185 / C2A).